Consider the following 768-residue polypeptide: ATP-dependent RNA helicase DBP4 (768 aa).

The Q motif motif lies at 41 to 69 (VFFKDLPISNSTLKGLNDSAFLKLTDIQR). The Helicase ATP-binding domain occupies 72–246 (IPMSLKGYDI…RLSLTDYKTI (175 aa)). 85–92 (AKTGSGKT) is a binding site for ATP. The DEAD box motif lies at 194–197 (DEAD). One can recognise a Helicase C-terminal domain in the interval 280-439 (KLDMLYSFIK…SIKPQLQSLL (160 aa)). 2 disordered regions span residues 581-612 (EEEL…KGNA) and 653-754 (KDVM…EPQT). Residues 653-666 (KDVMNEVDVEDKQV) show a composition bias toward basic and acidic residues. The span at 667 to 678 (AKQKKQEKKRKR) shows a compositional bias: basic residues. The segment covering 711 to 721 (DMQDPDSDDEE) has biased composition (acidic residues).

Belongs to the DEAD box helicase family. DDX10/DBP4 subfamily. Interacts with the U3 and U14 snoRNAs. Associates with pre-ribosomal complexes.

The protein resides in the nucleus. The protein localises to the nucleolus. The catalysed reaction is ATP + H2O = ADP + phosphate + H(+). Its function is as follows. ATP-dependent RNA helicase required for ribosome biogenesis. Involved in the release of U14 snoRNA in pre-ribosomal complexes. Required for pre-rRNA cleavage at site A2. This is ATP-dependent RNA helicase DBP4 (DBP4) from Vanderwaltozyma polyspora (strain ATCC 22028 / DSM 70294 / BCRC 21397 / CBS 2163 / NBRC 10782 / NRRL Y-8283 / UCD 57-17) (Kluyveromyces polysporus).